The sequence spans 97 residues: Aspartyl/glutamyl-tRNA(Asn/Gln) amidotransferase subunit C (97 aa).

This sequence belongs to the GatC family. In terms of assembly, heterotrimer of A, B and C subunits.

It carries out the reaction L-glutamyl-tRNA(Gln) + L-glutamine + ATP + H2O = L-glutaminyl-tRNA(Gln) + L-glutamate + ADP + phosphate + H(+). The catalysed reaction is L-aspartyl-tRNA(Asn) + L-glutamine + ATP + H2O = L-asparaginyl-tRNA(Asn) + L-glutamate + ADP + phosphate + 2 H(+). Functionally, allows the formation of correctly charged Asn-tRNA(Asn) or Gln-tRNA(Gln) through the transamidation of misacylated Asp-tRNA(Asn) or Glu-tRNA(Gln) in organisms which lack either or both of asparaginyl-tRNA or glutaminyl-tRNA synthetases. The reaction takes place in the presence of glutamine and ATP through an activated phospho-Asp-tRNA(Asn) or phospho-Glu-tRNA(Gln). In Listeria innocua serovar 6a (strain ATCC BAA-680 / CLIP 11262), this protein is Aspartyl/glutamyl-tRNA(Asn/Gln) amidotransferase subunit C.